The primary structure comprises 175 residues: Methylated-DNA--protein-cysteine methyltransferase (175 aa).

DNA is bound by residues Tyr115 and Arg127. The active-site Nucleophile; methyl group acceptor is Cys144.

The protein belongs to the MGMT family.

The protein resides in the nucleus. The enzyme catalyses a 6-O-methyl-2'-deoxyguanosine in DNA + L-cysteinyl-[protein] = S-methyl-L-cysteinyl-[protein] + a 2'-deoxyguanosine in DNA. The catalysed reaction is a 4-O-methyl-thymidine in DNA + L-cysteinyl-[protein] = a thymidine in DNA + S-methyl-L-cysteinyl-[protein]. In terms of biological role, involved in the cellular defense against the biological effects of O6-methylguanine (O6-MeG) and O4-methylthymine (O4-MeT) in DNA. Repairs the methylated nucleobase in DNA by stoichiometrically transferring the methyl group to a cysteine residue in the enzyme. This is a suicide reaction: the enzyme is irreversibly inactivated. The protein is Methylated-DNA--protein-cysteine methyltransferase (MGT1) of Candida albicans (strain SC5314 / ATCC MYA-2876) (Yeast).